A 573-amino-acid polypeptide reads, in one-letter code: Probable D-xylulose kinase A (573 aa).

The substrate site is built by His-100, Arg-171, Asp-287, and Asn-288. ATP contacts are provided by residues Trp-368, 473–474 (GG), and Asn-477.

This sequence belongs to the FGGY kinase family.

Its subcellular location is the cytoplasm. It carries out the reaction D-xylulose + ATP = D-xylulose 5-phosphate + ADP + H(+). In terms of biological role, highly specific D-xylulose kinase which participates in the catabolism of xylose. Xylose is a major component of hemicelluloses such as xylan. Most fungi utilize D-xylose via three enzymatic reactions, xylose reductase (XR), xylitol dehydrogenase (XDH), and xylulokinase, to form xylulose 5-phosphate, which enters pentose phosphate pathway. This is Probable D-xylulose kinase A (xkiA) from Aspergillus terreus (strain NIH 2624 / FGSC A1156).